The chain runs to 397 residues: CCA-adding enzyme (397 aa).

2 residues coordinate ATP: Gly26 and Arg29. Residues Gly26 and Arg29 each contribute to the CTP site. Residues Asp39 and Asp41 each coordinate Mg(2+). Positions 110, 153, 156, 159, and 162 each coordinate ATP. Residues Arg110, Asp153, Arg156, Arg159, and Arg162 each coordinate CTP.

Belongs to the tRNA nucleotidyltransferase/poly(A) polymerase family. Bacterial CCA-adding enzyme type 3 subfamily. In terms of assembly, homodimer. Requires Mg(2+) as cofactor.

It carries out the reaction a tRNA precursor + 2 CTP + ATP = a tRNA with a 3' CCA end + 3 diphosphate. The catalysed reaction is a tRNA with a 3' CCA end + 2 CTP + ATP = a tRNA with a 3' CCACCA end + 3 diphosphate. Its function is as follows. Catalyzes the addition and repair of the essential 3'-terminal CCA sequence in tRNAs without using a nucleic acid template. Adds these three nucleotides in the order of C, C, and A to the tRNA nucleotide-73, using CTP and ATP as substrates and producing inorganic pyrophosphate. tRNA 3'-terminal CCA addition is required both for tRNA processing and repair. Also involved in tRNA surveillance by mediating tandem CCA addition to generate a CCACCA at the 3' terminus of unstable tRNAs. While stable tRNAs receive only 3'-terminal CCA, unstable tRNAs are marked with CCACCA and rapidly degraded. This chain is CCA-adding enzyme, found in Bacillus cereus (strain G9842).